The primary structure comprises 311 residues: Pyrimidine-specific ribonucleoside hydrolase RihA (311 aa).

The active site involves His-240.

The protein belongs to the IUNH family. RihA subfamily.

In terms of biological role, hydrolyzes with equal efficiency cytidine or uridine to ribose and cytosine or uracil, respectively. The protein is Pyrimidine-specific ribonucleoside hydrolase RihA of Escherichia coli O17:K52:H18 (strain UMN026 / ExPEC).